The primary structure comprises 92 residues: Small ribosomal subunit protein uS19c (92 aa).

It belongs to the universal ribosomal protein uS19 family.

The protein localises to the plastid. Its subcellular location is the chloroplast. Functionally, protein S19 forms a complex with S13 that binds strongly to the 16S ribosomal RNA. The protein is Small ribosomal subunit protein uS19c of Chaetosphaeridium globosum (Charophycean green alga).